The chain runs to 86 residues: uncharacterized protein (86 aa).

The signal sequence occupies residues 1-22 (MKTINTVVAAMALSTLSFGVFA).

Belongs to the BhsA/McbA family.

The protein localises to the periplasm. This is an uncharacterized protein from Escherichia coli O6:H1 (strain CFT073 / ATCC 700928 / UPEC).